We begin with the raw amino-acid sequence, 292 residues long: NAD kinase (292 aa).

Residue aspartate 73 is the Proton acceptor of the active site. NAD(+)-binding positions include 73–74, 147–148, histidine 158, arginine 175, aspartate 177, 188–193, and glutamine 247; these read DG, NE, and TAYSLS.

Belongs to the NAD kinase family. The cofactor is a divalent metal cation.

The protein localises to the cytoplasm. The catalysed reaction is NAD(+) + ATP = ADP + NADP(+) + H(+). In terms of biological role, involved in the regulation of the intracellular balance of NAD and NADP, and is a key enzyme in the biosynthesis of NADP. Catalyzes specifically the phosphorylation on 2'-hydroxyl of the adenosine moiety of NAD to yield NADP. The polypeptide is NAD kinase (Salmonella choleraesuis (strain SC-B67)).